Reading from the N-terminus, the 909-residue chain is uncharacterized protein (909 aa).

This is an uncharacterized protein from Sinorhizobium fredii (strain NBRC 101917 / NGR234).